Consider the following 533-residue polypeptide: Probable ribonuclease ZC3H12D (533 aa).

Residues 92 to 246 form the RNase NYN domain; it reads LRPIVIDGSN…PLGRRGPTLS (155 aa). A C3H1-type zinc finger spans residues 251-282; that stretch reads KKPRPPEPSWQHCPYGKKCTYGVKCRFYHPER. The tract at residues 262–368 is necessary for interaction with ZC3H12A; that stretch reads HCPYGKKCTY…ASGVVSQSRG (107 aa). The interval 302 to 335 is disordered; sequence LGGGAEEPRTPSARSRPTTARLLPQEPGEHDLPP.

This sequence belongs to the ZC3H12 family. Interacts with ZC3H12A. It depends on Mg(2+) as a cofactor. Expressed at low levels in bone marrow derived macrophages.

The protein localises to the cytoplasm. It localises to the P-body. In terms of biological role, may regulate cell growth likely by suppressing RB1 phosphorylation. May function as RNase and regulate the levels of target RNA species (Potential). In association with ZC3H12A enhances the degradation of interleukin IL-6 mRNA level in activated macrophages. Serve as a tumor suppressor in certain leukemia cells. Overexpression inhibits the G1 to S phase progression through suppression of RB1 phosphorylation. The protein is Probable ribonuclease ZC3H12D of Mus musculus (Mouse).